The primary structure comprises 515 residues: Maturase K (515 aa).

This sequence belongs to the intron maturase 2 family. MatK subfamily.

It localises to the plastid. The protein localises to the chloroplast. In terms of biological role, usually encoded in the trnK tRNA gene intron. Probably assists in splicing its own and other chloroplast group II introns. In Sorghum bicolor (Sorghum), this protein is Maturase K.